The sequence spans 338 residues: Aspartate carbamoyltransferase catalytic subunit (338 aa).

Residues Arg72 and Thr73 each contribute to the carbamoyl phosphate site. L-aspartate is bound at residue Lys100. Positions 122, 152, and 155 each coordinate carbamoyl phosphate. L-aspartate contacts are provided by Arg186 and Arg243. Carbamoyl phosphate contacts are provided by Gly284 and Pro285.

It belongs to the aspartate/ornithine carbamoyltransferase superfamily. ATCase family. In terms of assembly, heterododecamer (2C3:3R2) of six catalytic PyrB chains organized as two trimers (C3), and six regulatory PyrI chains organized as three dimers (R2).

It carries out the reaction carbamoyl phosphate + L-aspartate = N-carbamoyl-L-aspartate + phosphate + H(+). It participates in pyrimidine metabolism; UMP biosynthesis via de novo pathway; (S)-dihydroorotate from bicarbonate: step 2/3. Functionally, catalyzes the condensation of carbamoyl phosphate and aspartate to form carbamoyl aspartate and inorganic phosphate, the committed step in the de novo pyrimidine nucleotide biosynthesis pathway. This chain is Aspartate carbamoyltransferase catalytic subunit, found in Acinetobacter baumannii (strain ACICU).